The following is a 117-amino-acid chain: Large ribosomal subunit protein bL19 (117 aa).

The protein belongs to the bacterial ribosomal protein bL19 family.

Its function is as follows. This protein is located at the 30S-50S ribosomal subunit interface and may play a role in the structure and function of the aminoacyl-tRNA binding site. The chain is Large ribosomal subunit protein bL19 from Kineococcus radiotolerans (strain ATCC BAA-149 / DSM 14245 / SRS30216).